Consider the following 181-residue polypeptide: MNMKNIFLGFLSQIRSILMIFSNIFSFRETRLYPDEPLNLSLRYRGRIILTRNSNGSERCVACNLCSAVCPVNCISLKKSEEKNGRWYAKSFQINLSRCIFCGLCEEACPTMAIQLTPDIELSEFKRKELLYKKKNLLFSGPGKFSKYDFYSISGVNTTYDLKKNLSKKISNCVDVTDLLP.

2 consecutive 4Fe-4S ferredoxin-type domains span residues 51 to 80 and 90 to 119; these read TRNS…LKKS and KSFQ…LTPD. 8 residues coordinate [4Fe-4S] cluster: Cys-60, Cys-63, Cys-66, Cys-70, Cys-99, Cys-102, Cys-105, and Cys-109.

This sequence belongs to the complex I 23 kDa subunit family. As to quaternary structure, NDH-1 is composed of 13 different subunits. Subunits NuoA, H, J, K, L, M, N constitute the membrane sector of the complex. It depends on [4Fe-4S] cluster as a cofactor.

It is found in the cell membrane. The enzyme catalyses a quinone + NADH + 5 H(+)(in) = a quinol + NAD(+) + 4 H(+)(out). NDH-1 shuttles electrons from NADH, via FMN and iron-sulfur (Fe-S) centers, to quinones in the respiratory chain. The immediate electron acceptor for the enzyme in this species is believed to be ubiquinone. Couples the redox reaction to proton translocation (for every two electrons transferred, four hydrogen ions are translocated across the cytoplasmic membrane), and thus conserves the redox energy in a proton gradient. In Buchnera aphidicola subsp. Cinara cedri (strain Cc), this protein is NADH-quinone oxidoreductase subunit I.